The following is a 237-amino-acid chain: Pheromone-regulated membrane protein 8 (237 aa).

Residues 1-47 (MQTPSENTNAKSDSLDEPGAYLIEENVALPKDIFHSYLSYWIYEAAH) are Cytoplasmic-facing. A helical membrane pass occupies residues 48-68 (CTPVMLLSLVIGVLISIIILF). Topologically, residues 69-74 (HDNENC) are extracellular. Residues 75 to 95 (VGVSVGFLLIFSGILVIVLIL) traverse the membrane as a helical segment. The Cytoplasmic segment spans residues 96–237 (RFGPQISDED…QEYPGVDEFF (142 aa)). A disordered region spans residues 174–201 (SSASNVKDAQSNDETAGTPNEAAESSSF). Positions 236–237 (FF) are COPII binding.

This sequence belongs to the DUP/COS family. As to quaternary structure, interacts with PRM9. Binds to SEC23/24 of COPII coated vesicles.

It is found in the membrane. Its subcellular location is the endoplasmic reticulum. May be involved in endoplasmic reticulum exit trafficking of proteins. The protein is Pheromone-regulated membrane protein 8 (PRM8) of Saccharomyces cerevisiae (strain ATCC 204508 / S288c) (Baker's yeast).